Consider the following 195-residue polypeptide: Kiwa protein KwaA (195 aa).

3 helical membrane-spanning segments follow: residues 10–30 (GLYILSLAMLFVFIIILTAKI), 46–66 (LVLTNIVPIVCFVFFLFSIYF), and 117–137 (IAYLLLVVVIGIIFIKTDKYY).

The protein resides in the cell inner membrane. Functionally, component of antiviral defense system Kiwa, composed of KwaA and KwaB. Expression of Kiwa in E.coli (strain MG1655) confers resistance to phages lambda and SECphi18. In Escherichia coli O55:H7 (strain RM12579 / EPEC), this protein is Kiwa protein KwaA.